Reading from the N-terminus, the 734-residue chain is Probable inactive histone-lysine N-methyltransferase SUVR1 (734 aa).

A disordered region spans residues 61 to 163 (QSTEKNKKEE…LPPLKRYVRR (103 aa)). The span at 62–81 (STEKNKKEEEKKKKEEEKKS) shows a compositional bias: basic and acidic residues. Over residues 98–109 (VQDEEDDMDEDE) the composition is skewed to acidic residues. Residues 113–122 (KRRLRSRRGR) show a composition bias toward basic residues. The segment covering 123-132 (ASSSSSSSSS) has biased composition (low complexity). Zn(2+) contacts are provided by Cys460, Cys464, Cys468, Cys477, Cys545, Cys549, Cys551, and Cys555. The Pre-SET domain occupies 460 to 563 (CSTSCIEDCL…RCGNRVVQRG (104 aa)). The region spanning 566–696 (NKLQVFFTPN…AMEELAWDYG (131 aa)) is the SET domain. Residues 577 to 579 (KGW) and 652 to 653 (NH) contribute to the S-adenosyl-L-methionine site. Cys655 provides a ligand contact to Zn(2+). An S-adenosyl-L-methionine-binding site is contributed by Tyr695. A Post-SET domain is found at 707–723 (KPFDCLCGSRFCRNKKR). Residues Cys711, Cys713, and Cys718 each coordinate Zn(2+).

Belongs to the class V-like SAM-binding methyltransferase superfamily. Histone-lysine methyltransferase family. As to quaternary structure, interacts with SUVR2 and itself.

The protein resides in the nucleus. It localises to the chromosome. In terms of biological role, probable inactive histone-lysine methyltransferase that acts as regulator of transctiptional gene silencing independently of histone H3K9 methylation. Contributes to transcriptional gene silencing at RNA-directed DNA methylation (RdDM) target loci but also at RdDM-independent target loci. The protein is Probable inactive histone-lysine N-methyltransferase SUVR1 (SUVR1) of Arabidopsis thaliana (Mouse-ear cress).